Reading from the N-terminus, the 462-residue chain is MGQDAFMEPFGDTLGVFQCKIYLLLFGACSGLKVTVPSHTVHGVRGQALYLPVHYGFHTPASDIQIIWLFERPHTMPKYLLGSVNKSVVPDLEYQHKFTMMPPNASLLINPLQFPDEGNYIVKVNIQGNGTLSASQKIQVTVDDPVTKPVVQIHPPSGAVEYVGNMTLTCHVEGGTRLAYQWLKNGRPVHTSSTYSFSPQNNTLHIAPVTKEDIGNYSCLVRNPVSEMESDIIMPIIYYGPYGLQVNSDKGLKVGEVFTVDLGEAILFDCSADSHPPNTYSWIRRTDNTTYIIKHGPRLEVASEKVAQKTMDYVCCAYNNITGRQDETHFTVIITSVGLEKLAQKGKSLSPLASITGISLFLIISMCLLFLWKKYQPYKVIKQKLEGRPETEYRKAQTFSGHEDALDDFGIYEFVAFPDVSGVSRIPSRSVPASDCVSGQDLHSTVYEVIQHIPAQQQDHPE.

The signal sequence occupies residues 1 to 31 (MGQDAFMEPFGDTLGVFQCKIYLLLFGACSG). N-linked (GlcNAc...) asparagine glycosylation is found at Asn-85, Asn-129, and Asn-165. 2 consecutive Ig-like C2-type domains span residues 149–233 (PVVQ…SDII) and 235–331 (PIIY…THFT). Disulfide bonds link Cys-170–Cys-219 and Cys-270–Cys-315. Asn-320 carries N-linked (GlcNAc...) asparagine glycosylation. The helical transmembrane segment at 352 to 372 (LASITGISLFLIISMCLLFLW) threads the bilayer. At 373-462 (KKYQPYKVIK…IPAQQQDHPE (90 aa)) the chain is on the cytoplasmic side.

In terms of processing, poly-ADP-ribosylated (PARsylated) by tankyrase TNKS during late G2 and prophase, leading to translocation to mitotic centrosomes. N-glycosylated. In terms of tissue distribution, widely expressed.

Its subcellular location is the golgi apparatus membrane. It is found in the cytoplasm. The protein localises to the cytoskeleton. The protein resides in the spindle. It localises to the microtubule organizing center. Its subcellular location is the centrosome. It is found in the midbody. Functionally, required during prometaphase for centrosome maturation. Following poly-ADP-ribosylation (PARsylation) by TNKS, translocates from the Golgi apparatus to mitotic centrosomes and plays a key role in the formation of robust microtubules for prompt movement of chromosomes: anchors AKAP9/CG-NAP, a scaffold protein of the gamma-tubulin ring complex and promotes centrosome maturation. The chain is HEPACAM family member 2 (HEPACAM2) from Homo sapiens (Human).